Here is a 241-residue protein sequence, read N- to C-terminus: Large ribosomal subunit protein uL2 (241 aa).

A disordered region spans residues 201–241 (VDHPHGGGNRQHPGRPTTVSRHAPPGRKVGSIAAKRTGLKR).

Belongs to the universal ribosomal protein uL2 family. As to quaternary structure, part of the 50S ribosomal subunit. Forms a bridge to the 30S subunit in the 70S ribosome.

Its function is as follows. One of the primary rRNA binding proteins. Required for association of the 30S and 50S subunits to form the 70S ribosome, for tRNA binding and peptide bond formation. It has been suggested to have peptidyltransferase activity; this is somewhat controversial. Makes several contacts with the 16S rRNA in the 70S ribosome. In Methanobrevibacter smithii (strain ATCC 35061 / DSM 861 / OCM 144 / PS), this protein is Large ribosomal subunit protein uL2.